Consider the following 203-residue polypeptide: Ras-related protein Rab-7a (203 aa).

GTP contacts are provided by residues 15–22, 34–40, 63–67, 125–128, and 157–158; these read GDSGVGKT, SNQYKAT, DTAGQ, NKID, and AK. The short motif at 37-45 is the Effector region element; it reads YKATIGADF. 2 S-geranylgeranyl cysteine lipidation sites follow: Cys-202 and Cys-203.

Belongs to the small GTPase superfamily. Rab family.

It is found in the late endosome membrane. The protein localises to the lysosome membrane. The protein resides in the cytoplasmic vesicle. Its subcellular location is the autophagosome membrane. It localises to the lipid droplet. It carries out the reaction GTP + H2O = GDP + phosphate + H(+). Small GTPase which cycles between active GTP-bound and inactive GDP-bound states. In its active state, binds to a variety of effector proteins playing a key role in the regulation of endo-lysosomal trafficking. Governs early-to-late endosomal maturation, microtubule minus-end as well as plus-end directed endosomal migration and positioning, and endosome-lysosome transport through different protein-protein interaction cascades. Involved in lipophagy, a cytosolic lipase-independent autophagic pathway. The protein is Ras-related protein Rab-7a (rab7A) of Dictyostelium discoideum (Social amoeba).